The sequence spans 247 residues: STING ER exit protein (247 aa).

S127 carries the post-translational modification Phosphoserine. Residues 195-216 are a coiled coil; the sequence is EAREIADSYANNARIIEKQLQR. The segment at 215 to 247 is disordered; that stretch reads QRKGGKLSDVGIKTKTEDAPPPQKKQRGTLLER.

This sequence belongs to the STEEP1 family.

Molecular adapter that stimulates membrane curvature formation and subsequent endoplasmic reticulum exit site (ERES) establishment by recruiting PI3K complex I, leading to COPII vesicle-mediated transport. This chain is STING ER exit protein, found in Drosophila melanogaster (Fruit fly).